Consider the following 405-residue polypeptide: GTPase Obg (405 aa).

The 159-residue stretch at 1–159 (MRFIDEAVVT…KVLKFELKVV (159 aa)) folds into the Obg domain. Residues 160 to 333 (ADVGLIGLPN…IKYHLMNEIE (174 aa)) enclose the OBG-type G domain. GTP contacts are provided by residues 166-173 (GLPNAGKS), 191-195 (FTTLV), 213-216 (DIPG), 283-286 (NKID), and 314-316 (ATL). 2 residues coordinate Mg(2+): Ser173 and Thr193. The span at 371-382 (YRAARKAAREGT) shows a compositional bias: basic and acidic residues. The segment at 371–405 (YRAARKAAREGTDLSDDDFDGSDDDDDGVEVIYAP) is disordered. The segment covering 383–399 (DLSDDDFDGSDDDDDGV) has biased composition (acidic residues).

The protein belongs to the TRAFAC class OBG-HflX-like GTPase superfamily. OBG GTPase family. Monomer. The cofactor is Mg(2+).

The protein resides in the cytoplasm. Its function is as follows. An essential GTPase which binds GTP, GDP and possibly (p)ppGpp with moderate affinity, with high nucleotide exchange rates and a fairly low GTP hydrolysis rate. Plays a role in control of the cell cycle, stress response, ribosome biogenesis and in those bacteria that undergo differentiation, in morphogenesis control. In Psychrobacter arcticus (strain DSM 17307 / VKM B-2377 / 273-4), this protein is GTPase Obg.